A 119-amino-acid polypeptide reads, in one-letter code: Large ribosomal subunit protein bL20 (119 aa).

It belongs to the bacterial ribosomal protein bL20 family.

Its function is as follows. Binds directly to 23S ribosomal RNA and is necessary for the in vitro assembly process of the 50S ribosomal subunit. It is not involved in the protein synthesizing functions of that subunit. The chain is Large ribosomal subunit protein bL20 from Stenotrophomonas maltophilia (strain K279a).